A 241-amino-acid chain; its full sequence is Tryptophan synthase alpha chain (241 aa).

Active-site proton acceptor residues include E31 and D42.

It belongs to the TrpA family. Tetramer of two alpha and two beta chains.

It catalyses the reaction (1S,2R)-1-C-(indol-3-yl)glycerol 3-phosphate + L-serine = D-glyceraldehyde 3-phosphate + L-tryptophan + H2O. Its pathway is amino-acid biosynthesis; L-tryptophan biosynthesis; L-tryptophan from chorismate: step 5/5. Its function is as follows. The alpha subunit is responsible for the aldol cleavage of indoleglycerol phosphate to indole and glyceraldehyde 3-phosphate. This chain is Tryptophan synthase alpha chain, found in Staphylococcus saprophyticus subsp. saprophyticus (strain ATCC 15305 / DSM 20229 / NCIMB 8711 / NCTC 7292 / S-41).